The chain runs to 89 residues: Small ribosomal subunit protein bS20 (89 aa).

It belongs to the bacterial ribosomal protein bS20 family.

Binds directly to 16S ribosomal RNA. This Sulfurovum sp. (strain NBC37-1) protein is Small ribosomal subunit protein bS20.